We begin with the raw amino-acid sequence, 246 residues long: Ribonuclease PH (246 aa).

Residues arginine 91 and 129–131 contribute to the phosphate site; that span reads GTR.

This sequence belongs to the RNase PH family. As to quaternary structure, homohexameric ring arranged as a trimer of dimers.

It carries out the reaction tRNA(n+1) + phosphate = tRNA(n) + a ribonucleoside 5'-diphosphate. In terms of biological role, phosphorolytic 3'-5' exoribonuclease that plays an important role in tRNA 3'-end maturation. Removes nucleotide residues following the 3'-CCA terminus of tRNAs; can also add nucleotides to the ends of RNA molecules by using nucleoside diphosphates as substrates, but this may not be physiologically important. Probably plays a role in initiation of 16S rRNA degradation (leading to ribosome degradation) during starvation. The protein is Ribonuclease PH of Paraburkholderia phytofirmans (strain DSM 17436 / LMG 22146 / PsJN) (Burkholderia phytofirmans).